The sequence spans 370 residues: Putative agmatine deiminase (370 aa).

Cysteine 361 functions as the Amidino-cysteine intermediate in the catalytic mechanism.

The protein belongs to the agmatine deiminase family.

The enzyme catalyses agmatine + H2O = N-carbamoylputrescine + NH4(+). This is Putative agmatine deiminase from Shewanella baltica (strain OS223).